We begin with the raw amino-acid sequence, 669 residues long: Histone-lysine N-methyltransferase, H3 lysine-9 specific SUVH3 (669 aa).

Disordered stretches follow at residues 56 to 127 (YSSF…EKKT) and 270 to 290 (ESLIYSGQGGNADKNRQASDQ). Composition is skewed to polar residues over residues 65–82 (QQPTHDTPDLNQTQNTPI) and 93–107 (RTPTKTNGPSSSSGT). A DNA-binding region (a.T hook) is located at residues 108–120 (KRGVGRPKGTTSV). In terms of domain architecture, YDG spans 208-355 (GTVPGIEVGD…CNTFKYKLVR (148 aa)). The Pre-SET domain occupies 430–491 (IGCSCSGSCS…SCKNRVIQTG (62 aa)). Residues Cys432, Cys434, Cys438, Cys445, Cys447, Cys473, Cys477, Cys479, and Cys483 each contribute to the Zn(2+) site. The region spanning 494 to 638 (SRLEVFKTRN…PMAELTYDYG (145 aa)) is the SET domain. S-adenosyl-L-methionine is bound by residues 504–506 (RGW), Asp540, Tyr542, Arg592, and 595–596 (NH). Zn(2+) is bound by residues Cys598, Cys657, Cys659, and Cys664. In terms of domain architecture, Post-SET spans 653 to 669 (GQRTCLCGSEQCRGSFG).

This sequence belongs to the class V-like SAM-binding methyltransferase superfamily. Histone-lysine methyltransferase family. Suvar3-9 subfamily. As to expression, expressed in leaves stems and flowers.

It is found in the nucleus. It localises to the chromosome. The protein resides in the centromere. The catalysed reaction is L-lysyl(9)-[histone H3] + S-adenosyl-L-methionine = N(6)-methyl-L-lysyl(9)-[histone H3] + S-adenosyl-L-homocysteine + H(+). Its function is as follows. Histone methyltransferase. Methylates 'Lys-9' of histone H3. H3 'Lys-9' methylation represents a specific tag for epigenetic transcriptional repression. In Arabidopsis thaliana (Mouse-ear cress), this protein is Histone-lysine N-methyltransferase, H3 lysine-9 specific SUVH3 (SUVH3).